A 674-amino-acid polypeptide reads, in one-letter code: tRNA 5-methylaminomethyl-2-thiouridine biosynthesis bifunctional protein MnmC (674 aa).

A tRNA (mnm(5)s(2)U34)-methyltransferase region spans residues 1-237; it reads MLTSYQLESP…KREMTVGELN (237 aa). Residues 270–674 form an FAD-dependent cmnm(5)s(2)U34 oxidoreductase region; it reads VGAGLAGANT…IRDLKRSQIL (405 aa).

It in the N-terminal section; belongs to the methyltransferase superfamily. tRNA (mnm(5)s(2)U34)-methyltransferase family. This sequence in the C-terminal section; belongs to the DAO family. The cofactor is FAD.

The protein resides in the cytoplasm. The catalysed reaction is 5-aminomethyl-2-thiouridine(34) in tRNA + S-adenosyl-L-methionine = 5-methylaminomethyl-2-thiouridine(34) in tRNA + S-adenosyl-L-homocysteine + H(+). Functionally, catalyzes the last two steps in the biosynthesis of 5-methylaminomethyl-2-thiouridine (mnm(5)s(2)U) at the wobble position (U34) in tRNA. Catalyzes the FAD-dependent demodification of cmnm(5)s(2)U34 to nm(5)s(2)U34, followed by the transfer of a methyl group from S-adenosyl-L-methionine to nm(5)s(2)U34, to form mnm(5)s(2)U34. The polypeptide is tRNA 5-methylaminomethyl-2-thiouridine biosynthesis bifunctional protein MnmC (Marinomonas sp. (strain MWYL1)).